We begin with the raw amino-acid sequence, 171 residues long: uncharacterized protein (171 aa).

This is an uncharacterized protein from Caenorhabditis elegans.